A 381-amino-acid chain; its full sequence is MASIRRPHSPAKQQHLLRHGHLGPFASSSPPSSPLRHSSSSSSPRSAAHHHHHLLAAAGHTSFRRPLPRFAAFFLLGSFLGLLHFLSHLPRPLGPIPNPNSHHRHRDPFPILQHPHPPSTPHSNHKLLIVVTPTRARPSQAYYLTRMAHTLRLLHDSPLLWIVVQAGNPTPEAAAALRRTAVLHRYVGCCHNINASAPDFRPHQINAALDIVDNHRLDGVLYFADEEGVYSLHLFHHLRQIRRFATWPVPEISQHTNEVVLQGPVCKQGQVVGWHTTHDGNKLRRFHLAMSGFAFNSTMLWDPKLRSHLAWNSIRHPEMVKESLQGSAFVEQLVEDESQMEGIPADCSQIMNWHVPFGSESVVYPKGWRVATDLDVIIPLK.

Topologically, residues 1 to 69 are cytoplasmic; it reads MASIRRPHSP…HTSFRRPLPR (69 aa). The disordered stretch occupies residues 21–50; it reads HLGPFASSSPPSSPLRHSSSSSSPRSAAHH. Residues 26 to 46 show a composition bias toward low complexity; sequence ASSSPPSSPLRHSSSSSSPRS. A helical; Signal-anchor for type II membrane protein membrane pass occupies residues 70–90; that stretch reads FAAFFLLGSFLGLLHFLSHLP. The Lumenal segment spans residues 91 to 381; sequence RPLGPIPNPN…TDLDVIIPLK (291 aa). The tract at residues 96-122 is disordered; that stretch reads IPNPNSHHRHRDPFPILQHPHPPSTPH. Residues Asn-194 and Asn-296 are each glycosylated (N-linked (GlcNAc...) asparagine).

Belongs to the glycosyltransferase 43 family.

It localises to the golgi apparatus membrane. In terms of biological role, involved in the synthesis of glucuronoxylan hemicellulose in secondary cell walls. The protein is Probable glucuronosyltransferase Os04g0103100 of Oryza sativa subsp. japonica (Rice).